The following is a 566-amino-acid chain: Peroxisomal targeting signal receptor (566 aa).

Cys5 participates in a covalent cross-link: Glycyl cysteine thioester (Cys-Gly) (interchain with G-Cter in ubiquitin). Residues 6–28 (SVGSNPLAQLNKHAQQNPALRQV) are amphipathic helix 1 (AH1). Lys17 participates in a covalent cross-link: Glycyl lysine isopeptide (Lys-Gly) (interchain with G-Cter in ubiquitin). Positions 53–71 (RFQMDQFMNRSPGFSDGQL) are amphipathic helix 2 (AH2). The disordered stretch occupies residues 88 to 159 (GLKKQDSGSS…IGRPMMHTGI (72 aa)). The span at 94–142 (SGSSNMSAGDTAQHSRSWGNEFNSRSPQQGLASRVNNVERISNTNSMSS) shows a compositional bias: polar residues. The short motif at 111–115 (WGNEF) is the WxxxF/Y motif 1 element. The tract at residues 145 to 151 (PGMSRIG) is amphipathic helix 3 (AH3). The short motif at 187–191 (WNEQF) is the WxxxF/Y motif 2 element. The amphipathic helix 4 (AH4) stretch occupies residues 225–241 (FQEVWDKLQAETADNNL). Residues 248-252 (WEKDY) carry the WxxxF/Y motif 3 motif. 5 TPR repeats span residues 277–311 (NPNA…DPAH), 312–345 (VDAW…DPTN), 416–449 (PEVQ…NPND), 451–483 (LMWN…KPSF), and 485–517 (RARY…HEVE).

The protein belongs to the peroxisomal targeting signal receptor family. In terms of assembly, interacts (via WxxxF/Y and LVxEF motifs) with PEX14; promoting translocation through the PEX13-PEX14 docking complex. In terms of processing, monoubiquitinated at Cys-5 by PEX2 during PEX5 passage through the retrotranslocation channel: monoubiquitination acts as a signal for PEX5 extraction and is required for proper export from peroxisomes and recycling. When PEX5 recycling is compromised, polyubiquitinated at Lys-17 by PEX10 during its passage through the retrotranslocation channel, leading to its degradation.

It localises to the cytoplasm. It is found in the cytosol. The protein resides in the peroxisome matrix. Its function is as follows. Receptor that mediates peroxisomal import of proteins containing a C-terminal PTS1-type tripeptide peroxisomal targeting signal (SKL-type). Binds to cargo proteins containing a PTS1 peroxisomal targeting signal in the cytosol, and translocates them into the peroxisome matrix by passing through the PEX13-PEX14 docking complex along with cargo proteins. PEX5 receptor is then retrotranslocated into the cytosol, leading to release of bound cargo in the peroxisome matrix, and reset for a subsequent peroxisome import cycle. The chain is Peroxisomal targeting signal receptor (PEX5) from Kluyveromyces lactis (strain ATCC 8585 / CBS 2359 / DSM 70799 / NBRC 1267 / NRRL Y-1140 / WM37) (Yeast).